The primary structure comprises 455 residues: Mycosin-4 (455 aa).

The signal sequence occupies residues 1–25 (MTTSRTLRLLVVSALATLSGLGTPV). Residues 74 to 384 (SAQLADLDQV…NGTVDALAAV (311 aa)) enclose the Peptidase S8 domain. Residues Asp98, His129, and Ser329 each act as charge relay system in the active site. Residues 389-417 (IPQAGTATSDPAPVAVPVPRRSTPGPSDR) are disordered. Over residues 394-412 (TATSDPAPVAVPVPRRSTP) the composition is skewed to low complexity. Residues 432 to 452 (LALMATLATASRRLRPGRNGI) form a helical membrane-spanning segment.

The protein belongs to the peptidase S8 family.

The protein localises to the cell membrane. The sequence is that of Mycosin-4 from Mycobacterium tuberculosis (strain ATCC 25618 / H37Rv).